Here is a 47-residue protein sequence, read N- to C-terminus: Lysis protein for colicins E2 and E3 (47 aa).

Residues 1 to 19 (MKKITGIILLLLAVIILSA) form the signal peptide. Cys-20 carries N-palmitoyl cysteine lipidation. A lipid anchor (S-diacylglycerol cysteine) is attached at Cys-20.

Its subcellular location is the cell outer membrane. Lysis proteins are required for both colicin release and partial cell lysis. This Escherichia coli protein is Lysis protein for colicins E2 and E3 (hic).